The sequence spans 330 residues: Putative protein N-methyltransferase FAM86B2 (330 aa).

At methionine 1 the chain carries N-acetylmethionine. Residues tryptophan 139, 165-167 (GSG), tryptophan 228, and alanine 247 contribute to the S-adenosyl-L-methionine site.

This sequence belongs to the class I-like SAM-binding methyltransferase superfamily. EEF2KMT family. Interacts with EEF2KMT.

The protein is Putative protein N-methyltransferase FAM86B2 (FAM86B2) of Homo sapiens (Human).